Here is a 154-residue protein sequence, read N- to C-terminus: Putative pre-16S rRNA nuclease (154 aa).

This sequence belongs to the YqgF nuclease family.

Its subcellular location is the cytoplasm. Its function is as follows. Could be a nuclease involved in processing of the 5'-end of pre-16S rRNA. This chain is Putative pre-16S rRNA nuclease, found in Gluconacetobacter diazotrophicus (strain ATCC 49037 / DSM 5601 / CCUG 37298 / CIP 103539 / LMG 7603 / PAl5).